The primary structure comprises 192 residues: Archaemetzincin (192 aa).

His137 is a binding site for Zn(2+). Glu138 functions as the Proton acceptor in the catalytic mechanism. 6 residues coordinate Zn(2+): His141, His147, Cys148, Cys153, Cys172, and Cys175.

Belongs to the peptidase M54 family. In terms of assembly, monomer. Requires Zn(2+) as cofactor.

Probable zinc metalloprotease whose natural substrate is unknown. This chain is Archaemetzincin, found in Pyrococcus furiosus (strain ATCC 43587 / DSM 3638 / JCM 8422 / Vc1).